A 314-amino-acid polypeptide reads, in one-letter code: Ribosomal protein L11 methyltransferase (314 aa).

Residues Thr166, Gly187, Asp209, and Asn251 each contribute to the S-adenosyl-L-methionine site.

This sequence belongs to the methyltransferase superfamily. PrmA family.

Its subcellular location is the cytoplasm. The enzyme catalyses L-lysyl-[protein] + 3 S-adenosyl-L-methionine = N(6),N(6),N(6)-trimethyl-L-lysyl-[protein] + 3 S-adenosyl-L-homocysteine + 3 H(+). Methylates ribosomal protein L11. This Clostridium tetani (strain Massachusetts / E88) protein is Ribosomal protein L11 methyltransferase.